Consider the following 604-residue polypeptide: Protein CBFA2T1 (604 aa).

A disordered region spans residues 32–114 (TEKHSTMPDS…SSSSLANQQL (83 aa)). Serine 41 carries the post-translational modification Phosphoserine. Residues 63-86 (QGAPRTSSFTPTTLTNGTSHSPTA) are compositionally biased toward polar residues. The span at 95 to 114 (NGFSNGPSSSSSSSLANQQL) shows a compositional bias: low complexity. In terms of domain architecture, TAFH spans 120–215 (ARQLSKLKRF…NPAQYLAQHE (96 aa)). Residues 230-298 (SELLLDVNEN…LPHPTPPPPQ (69 aa)) are disordered. Basic and acidic residues predominate over residues 238–264 (ENGKRRTPDRTKENGFDREPLHSEHPS). Residues 271 to 285 (SPGQRYSPNNGLSYQ) are compositionally biased toward polar residues. Over residues 289–298 (LPHPTPPPPQ) the composition is skewed to pro residues. The important for oligomerization stretch occupies residues 337-383 (QEEMIDHRLTDREWAEEWKHLDHLLNCIMDMVEKTRRSLTVLRRCQE). Residues 337 to 383 (QEEMIDHRLTDREWAEEWKHLDHLLNCIMDMVEKTRRSLTVLRRCQE) form a nervy homology region 2 (NHR2) region. The interval 401–423 (DLKKGGGSSSSHSRQQSPVNPDP) is disordered. Position 417 is a phosphoserine (serine 417). The segment at 443 to 492 (EEIWKKAEEAVNEVKRQAMTELQKAVSEAERKAHDMITTERAKMERTVAE) is nervy homology region 3 (NHR3). Zn(2+) contacts are provided by cysteine 515, cysteine 518, cysteine 526, cysteine 529, cysteine 535, cysteine 539, histidine 547, and cysteine 551. The MYND-type zinc finger occupies 515–551 (CWNCGRKASETCSGCNTARYCGSFCQHKDWEKHHHIC). Residues 557-576 (AQQQGDTPAVSSSVTPNSGA) are compositionally biased toward polar residues. Residues 557–604 (AQQQGDTPAVSSSVTPNSGAGSPMDTPPAATPRSTTPGTPSTIETTPR) form a disordered region. Residues 587 to 604 (TPRSTTPGTPSTIETTPR) show a composition bias toward low complexity.

Belongs to the CBFA2T family. As to quaternary structure, homooligomer. Homotetramerization is mediated by nervy homology region 2 (NRH2). Can interact with CBFA2T2 and CBFA2T3; heterotetramerization between members of the CBFA2T family is proposed. Interacts with TCF12, SIN3A, HDAC1, HDAC2, HDAC3, NCOR1, NCOR2. Interacts with ATN1 (via its N-terminus); the interaction enhances the transcriptional repression. Interacts (via its N-terminus) with ZBTB16; the interaction increases the transcription repression activity of ZBTB16. AML1-MTG8/ETO fusion protein interacts with CBFB. AML1-MTG8/ETO is part of a stable transcription factor complex AETFC in leukemic cells; AETFC formation seems to be involved in recruitment of EP300. AML1-MTG8/ETO nervy homology region 2-mediated oligomerization is proposed to be homotypic, required for AML1-MTG8/ETO-mediated transformation of primary hematopoietic cells and is required for AML1-MTG8/ETO interaction with TCF12. Most abundantly expressed in brain. Lower levels in lung, heart, testis and ovary.

It is found in the nucleus. Functionally, transcriptional corepressor which facilitates transcriptional repression via its association with DNA-binding transcription factors and recruitment of other corepressors and histone-modifying enzymes. Can repress the expression of MMP7 in a ZBTB33-dependent manner. Can repress transactivation mediated by TCF12. Acts as a negative regulator of adipogenesis. The AML1-MTG8/ETO fusion protein frequently found in leukemic cells is involved in leukemogenesis and contributes to hematopoietic stem/progenitor cell self-renewal. In Homo sapiens (Human), this protein is Protein CBFA2T1 (RUNX1T1).